Here is a 352-residue protein sequence, read N- to C-terminus: RNA 3'-terminal phosphate cyclase (352 aa).

ATP-binding positions include Q102 and 292–296; that span reads HMGDQ. H318 serves as the catalytic Tele-AMP-histidine intermediate.

This sequence belongs to the RNA 3'-terminal cyclase family. Type 1 subfamily.

The protein resides in the cytoplasm. The catalysed reaction is a 3'-end 3'-phospho-ribonucleotide-RNA + ATP = a 3'-end 2',3'-cyclophospho-ribonucleotide-RNA + AMP + diphosphate. In terms of biological role, catalyzes the conversion of 3'-phosphate to a 2',3'-cyclic phosphodiester at the end of RNA. The mechanism of action of the enzyme occurs in 3 steps: (A) adenylation of the enzyme by ATP; (B) transfer of adenylate to an RNA-N3'P to produce RNA-N3'PP5'A; (C) and attack of the adjacent 2'-hydroxyl on the 3'-phosphorus in the diester linkage to produce the cyclic end product. The biological role of this enzyme is unknown but it is likely to function in some aspects of cellular RNA processing. The sequence is that of RNA 3'-terminal phosphate cyclase from Methanopyrus kandleri (strain AV19 / DSM 6324 / JCM 9639 / NBRC 100938).